Consider the following 291-residue polypeptide: Elongation factor Ts (291 aa).

Residues 80–83 (TDFV) are involved in Mg(2+) ion dislocation from EF-Tu.

This sequence belongs to the EF-Ts family.

The protein resides in the cytoplasm. Functionally, associates with the EF-Tu.GDP complex and induces the exchange of GDP to GTP. It remains bound to the aminoacyl-tRNA.EF-Tu.GTP complex up to the GTP hydrolysis stage on the ribosome. The chain is Elongation factor Ts from Ligilactobacillus salivarius (strain UCC118) (Lactobacillus salivarius).